The following is a 416-amino-acid chain: Maltoporin (416 aa).

The N-terminal stretch at 1–26 (MELTMKKVSVIAAAVAATLAAGSAFA) is a signal peptide.

This sequence belongs to the porin LamB (TC 1.B.3) family. As to quaternary structure, homotrimer formed of three 18-stranded antiparallel beta-barrels, containing three independent channels.

The protein resides in the cell outer membrane. The enzyme catalyses beta-maltose(in) = beta-maltose(out). Involved in the transport of maltose and maltodextrins. This chain is Maltoporin, found in Vibrio cholerae serotype O1 (strain ATCC 39541 / Classical Ogawa 395 / O395).